The sequence spans 368 residues: Carbamoyl phosphate synthase small chain (368 aa).

Residues 1-178 (MKAVLGLEDG…GAAGAWKGSG (178 aa)) form a CPSase region. The L-glutamine site is built by Ser45, Gly230, and Gly232. In terms of domain architecture, Glutamine amidotransferase type-1 spans 182-368 (HAVVVDLGIK…KVVKVLGGGL (187 aa)). The active-site Nucleophile is Cys257. L-glutamine is bound by residues Phe258, Gln261, Asn299, Gly301, and Tyr302. Residues His342 and Glu344 contribute to the active site.

The protein belongs to the CarA family. Composed of two chains; the small (or glutamine) chain promotes the hydrolysis of glutamine to ammonia, which is used by the large (or ammonia) chain to synthesize carbamoyl phosphate. Tetramer of heterodimers (alpha,beta)4.

The catalysed reaction is hydrogencarbonate + L-glutamine + 2 ATP + H2O = carbamoyl phosphate + L-glutamate + 2 ADP + phosphate + 2 H(+). It carries out the reaction L-glutamine + H2O = L-glutamate + NH4(+). It functions in the pathway amino-acid biosynthesis; L-arginine biosynthesis; carbamoyl phosphate from bicarbonate: step 1/1. Its pathway is pyrimidine metabolism; UMP biosynthesis via de novo pathway; (S)-dihydroorotate from bicarbonate: step 1/3. Its function is as follows. Small subunit of the glutamine-dependent carbamoyl phosphate synthetase (CPSase). CPSase catalyzes the formation of carbamoyl phosphate from the ammonia moiety of glutamine, carbonate, and phosphate donated by ATP, constituting the first step of 2 biosynthetic pathways, one leading to arginine and/or urea and the other to pyrimidine nucleotides. The small subunit (glutamine amidotransferase) binds and cleaves glutamine to supply the large subunit with the substrate ammonia. In Methanosarcina mazei (strain ATCC BAA-159 / DSM 3647 / Goe1 / Go1 / JCM 11833 / OCM 88) (Methanosarcina frisia), this protein is Carbamoyl phosphate synthase small chain.